Consider the following 443-residue polypeptide: MSTTPATPKVGFVSLGCPKALVDSERILTQLRMEGYEVVPTYEDADVVVVNTCGFIDSAKAESLEVIGEAIKENGKVIVTGCMGVEEGSIRDVHPSVLSVTGPQQYEQVVNAVHEVVPPRQDHNPLIDLVPPQGVKLTPRHYAYLKISEGCNHSCSFCIIPSMRGKLVSRPVGEVLSEAERLVKAGVKEILVISQDTSAYGVDVKYKTDFWNGRPVKTRMLELCEALSSLGAWVRLHYVYPYPNVDDVIPLMAAGKILPYLDIPFQHASPKVLKSMKRPAFEDRTLARIKNWREQCPELVIRSTFIVGFPGETEEDFQYLLDWLTEAQLDRVGCFQYSPVEGAPANDLGLAEVPDDVKQERWDRFMAHQQAISAARLQLRIGKEIDVLIDEVEEQGSVGRSFFDAPEIDGSVFIDGDHGFKPGDKVRCRVVDADEYDMWAEPI.

In terms of domain architecture, MTTase N-terminal spans 8 to 118; the sequence is PKVGFVSLGC…VVNAVHEVVP (111 aa). Residues cysteine 17, cysteine 53, cysteine 82, cysteine 151, cysteine 155, and cysteine 158 each contribute to the [4Fe-4S] cluster site. The Radical SAM core domain occupies 137 to 375; the sequence is LTPRHYAYLK…MAHQQAISAA (239 aa). Residues 378-443 form the TRAM domain; sequence QLRIGKEIDV…DEYDMWAEPI (66 aa).

This sequence belongs to the methylthiotransferase family. RimO subfamily. [4Fe-4S] cluster serves as cofactor.

It is found in the cytoplasm. It carries out the reaction L-aspartate(89)-[ribosomal protein uS12]-hydrogen + (sulfur carrier)-SH + AH2 + 2 S-adenosyl-L-methionine = 3-methylsulfanyl-L-aspartate(89)-[ribosomal protein uS12]-hydrogen + (sulfur carrier)-H + 5'-deoxyadenosine + L-methionine + A + S-adenosyl-L-homocysteine + 2 H(+). In terms of biological role, catalyzes the methylthiolation of an aspartic acid residue of ribosomal protein uS12. In Pseudomonas putida (strain ATCC 700007 / DSM 6899 / JCM 31910 / BCRC 17059 / LMG 24140 / F1), this protein is Ribosomal protein uS12 methylthiotransferase RimO.